The primary structure comprises 898 residues: Phosphoenolpyruvate carboxylase (898 aa).

Active-site residues include H134 and K564.

Belongs to the PEPCase type 1 family. Requires Mg(2+) as cofactor.

The catalysed reaction is oxaloacetate + phosphate = phosphoenolpyruvate + hydrogencarbonate. In terms of biological role, forms oxaloacetate, a four-carbon dicarboxylic acid source for the tricarboxylic acid cycle. The sequence is that of Phosphoenolpyruvate carboxylase from Chromobacterium violaceum (strain ATCC 12472 / DSM 30191 / JCM 1249 / CCUG 213 / NBRC 12614 / NCIMB 9131 / NCTC 9757 / MK).